Consider the following 408-residue polypeptide: MKQESSLLAKLANGSLVLQILVGIIAGVSLASFSHEAAKQVAFLGSLFVGALKAIAPILVFILVASSIANQKKNTQTNMRPIVVLYLFGTFAAALTAVVLSMMFPTNLVLVAGVEGTSPPQGIGEVINTLLFKLVDNPVNALMTGNYIGILAWGVGLGLALHHASDSTKQVFADVSHGISQMVRFIIRLAPIGIFGLVAATFAETGFAAIAGYAKLLAVLLGAMAIIALIVNPLIVYVKIKRNPYPLVIRCLRESGVTAFFTRSSAANIPVNMALCEKLKLHEDTYSVSIPLGATINMGGAAITITVLTLAAAHTLGIQVDLLTALLLSVVAAISACGASGVAGGSLLLIPLACSLFGISNDVAMQVVAVGFIIGVIQDAAETALNSSTDVIFTAAACEAAENKAKLG.

9 consecutive transmembrane segments (helical) span residues 11–31 (LANGSLVLQILVGIIAGVSLA), 43–63 (FLGSLFVGALKAIAPILVFIL), 82–102 (IVVLYLFGTFAAALTAVVLSM), 141–161 (ALMTGNYIGILAWGVGLGLAL), 192–212 (IGIFGLVAATFAETGFAAIAG), 216–236 (LLAVLLGAMAIIALIVNPLIV), 290–310 (IPLGATINMGGAAITITVLTL), 316–336 (LGIQVDLLTALLLSVVAAISA), and 363–383 (VAMQVVAVGFIIGVIQDAAET).

Belongs to the dicarboxylate/amino acid:cation symporter (DAACS) (TC 2.A.23) family.

The protein resides in the cell inner membrane. It catalyses the reaction L-serine(in) + Na(+)(in) = L-serine(out) + Na(+)(out). It carries out the reaction L-threonine(in) + Na(+)(in) = L-threonine(out) + Na(+)(out). Its function is as follows. Involved in the import of serine and threonine into the cell, with the concomitant import of sodium (symport system). The sequence is that of Serine/threonine transporter SstT from Shewanella sp. (strain ANA-3).